Reading from the N-terminus, the 542-residue chain is CTP synthase (542 aa).

Residues 1 to 265 (MTAFIFITGG…GRMLTELLKV (265 aa)) are amidoligase domain. Residue S13 participates in CTP binding. A UTP-binding site is contributed by S13. 14 to 19 (SVGKGI) provides a ligand contact to ATP. Position 54 (Y54) interacts with L-glutamine. D71 lines the ATP pocket. The Mg(2+) site is built by D71 and E140. Residues 147–149 (DYE), 186–191 (KTKPLQ), and K222 each bind CTP. UTP is bound by residues 186-191 (KTKPLQ) and K222. The 236-residue stretch at 297–532 (YVKLRDAYIS…LKAALARKMG (236 aa)) folds into the Glutamine amidotransferase type-1 domain. G352 serves as a coordination point for L-glutamine. C379 (nucleophile; for glutamine hydrolysis) is an active-site residue. Residues 380–383 (YGMQ), E403, and R460 contribute to the L-glutamine site. Residues H505 and E507 contribute to the active site.

This sequence belongs to the CTP synthase family. As to quaternary structure, homotetramer.

The catalysed reaction is UTP + L-glutamine + ATP + H2O = CTP + L-glutamate + ADP + phosphate + 2 H(+). The enzyme catalyses L-glutamine + H2O = L-glutamate + NH4(+). It carries out the reaction UTP + NH4(+) + ATP = CTP + ADP + phosphate + 2 H(+). It functions in the pathway pyrimidine metabolism; CTP biosynthesis via de novo pathway; CTP from UDP: step 2/2. Its activity is regulated as follows. Allosterically activated by GTP, when glutamine is the substrate; GTP has no effect on the reaction when ammonia is the substrate. The allosteric effector GTP functions by stabilizing the protein conformation that binds the tetrahedral intermediate(s) formed during glutamine hydrolysis. Inhibited by the product CTP, via allosteric rather than competitive inhibition. Catalyzes the ATP-dependent amination of UTP to CTP with either L-glutamine or ammonia as the source of nitrogen. Regulates intracellular CTP levels through interactions with the four ribonucleotide triphosphates. The polypeptide is CTP synthase (Caldivirga maquilingensis (strain ATCC 700844 / DSM 13496 / JCM 10307 / IC-167)).